We begin with the raw amino-acid sequence, 200 residues long: Holliday junction branch migration complex subunit RuvA (200 aa).

The domain I stretch occupies residues 1-63 (MIGKLSGKID…EEHIHLYGFL (63 aa)). Residues 64-142 (TLEEKNFFNL…KIFSSSAIIK (79 aa)) are domain II. A flexible linker region spans residues 142–146 (KDSSN). The tract at residues 147–200 (ISSVEINEVIKALVNLGFTRFEAQNTVQGIITQNTKISIDELIKTALKNRNSSF) is domain III.

This sequence belongs to the RuvA family. As to quaternary structure, homotetramer. Forms an RuvA(8)-RuvB(12)-Holliday junction (HJ) complex. HJ DNA is sandwiched between 2 RuvA tetramers; dsDNA enters through RuvA and exits via RuvB. An RuvB hexamer assembles on each DNA strand where it exits the tetramer. Each RuvB hexamer is contacted by two RuvA subunits (via domain III) on 2 adjacent RuvB subunits; this complex drives branch migration. In the full resolvosome a probable DNA-RuvA(4)-RuvB(12)-RuvC(2) complex forms which resolves the HJ.

It is found in the cytoplasm. The RuvA-RuvB-RuvC complex processes Holliday junction (HJ) DNA during genetic recombination and DNA repair, while the RuvA-RuvB complex plays an important role in the rescue of blocked DNA replication forks via replication fork reversal (RFR). RuvA specifically binds to HJ cruciform DNA, conferring on it an open structure. The RuvB hexamer acts as an ATP-dependent pump, pulling dsDNA into and through the RuvAB complex. HJ branch migration allows RuvC to scan DNA until it finds its consensus sequence, where it cleaves and resolves the cruciform DNA. This is Holliday junction branch migration complex subunit RuvA from Rickettsia typhi (strain ATCC VR-144 / Wilmington).